Here is a 105-residue protein sequence, read N- to C-terminus: U7-hexatoxin-Hi1a (105 aa).

The first 23 residues, 1 to 23 (MKTILLFLGVCAVGASMMTGGWT), serve as a signal peptide directing secretion.

This sequence belongs to the cystatin family. In terms of processing, contains 2 disulfide bonds. Expressed by the venom gland.

It localises to the secreted. Inhibits various C1 cysteine proteases. This protein has no toxic activity and its function in the venom is unknown. It may play a role as a housekeeping or regulatory protein. The protein is U7-hexatoxin-Hi1a of Hadronyche infensa (Fraser island funnel-web spider).